Consider the following 469-residue polypeptide: 3-isopropylmalate dehydratase large subunit (469 aa).

Positions 347, 410, and 413 each coordinate [4Fe-4S] cluster.

This sequence belongs to the aconitase/IPM isomerase family. LeuC type 1 subfamily. Heterodimer of LeuC and LeuD. [4Fe-4S] cluster is required as a cofactor.

It catalyses the reaction (2R,3S)-3-isopropylmalate = (2S)-2-isopropylmalate. Its pathway is amino-acid biosynthesis; L-leucine biosynthesis; L-leucine from 3-methyl-2-oxobutanoate: step 2/4. Functionally, catalyzes the isomerization between 2-isopropylmalate and 3-isopropylmalate, via the formation of 2-isopropylmaleate. This Burkholderia ambifaria (strain MC40-6) protein is 3-isopropylmalate dehydratase large subunit.